The primary structure comprises 540 residues: Growth factor receptor-bound protein 14 (540 aa).

Thr-2 bears the N-acetylthreonine mark. Gln-9 bears the Phosphothreonine mark. One can recognise a Ras-associating domain in the interval 106–192; that stretch reads KKQVIKVYSE…NKLYFRKNYA (87 aa). The 109-residue stretch at 234–342 folds into the PH domain; that stretch reads YPEIHGFLHA…WVTAIRLLKY (109 aa). 2 positions are modified to phosphoserine: Ser-372 and Ser-375. An SH2 domain is found at 439 to 535; sequence WFHHKISRDE…VLPCKLKHYC (97 aa).

It belongs to the GRB7/10/14 family. Interacts with the cytoplasmic domain of the autophosphorylated insulin receptor (INSR), through the SH2 domain. Interacts with GRB14 (via BPS domain); this interaction protects the tyrosines in the activation loop on INSR from dephosphorylation. Binds to the ankyrin repeat region of TNKS2 via its N-terminus. Interacts with activated NRAS. Interacts (via SH2 domain) with TEK/TIE2 (tyrosine phosphorylated). Post-translationally, phosphorylated on serine residues. Phosphorylated on tyrosine residues by TEK/TIE2. Expressed at high levels in the liver, kidney, pancreas, testis, ovary, heart and skeletal muscle.

Its subcellular location is the cytoplasm. It is found in the endosome membrane. Adapter protein which modulates coupling of cell surface receptor kinases with specific signaling pathways. Binds to, and suppresses signals from, the activated insulin receptor (INSR). Potent inhibitor of insulin-stimulated MAPK3 phosphorylation. Plays a critical role regulating PDPK1 membrane translocation in response to insulin stimulation and serves as an adapter protein to recruit PDPK1 to activated insulin receptor, thus promoting PKB/AKT1 phosphorylation and transduction of the insulin signal. The sequence is that of Growth factor receptor-bound protein 14 (GRB14) from Homo sapiens (Human).